The chain runs to 380 residues: Alpha-N-acetylneuraminate alpha-2,8-sialyltransferase ST8SIA3 (380 aa).

The Cytoplasmic segment spans residues 1–9 (MRNCKMARV). Residues 10 to 33 (ASVLGLVMLSVALLILSLISYVSL) form a helical; Signal-anchor for type II membrane protein membrane-spanning segment. The Lumenal portion of the chain corresponds to 34–380 (KKENIFTTPK…LTKLTLSHCA (347 aa)). N-linked (GlcNAc...) asparagine glycosylation is found at Asn-93, Asn-113, and Asn-160. Intrachain disulfides connect Cys-162-Cys-313 and Cys-176-Cys-379. CMP-N-acetyl-beta-neuraminate is bound by residues Asn-167 and Asn-190. Asn-206 carries an N-linked (GlcNAc...) asparagine glycan. Residues Ser-300, Thr-301, Gly-302, Trp-322, Tyr-336, and His-337 each contribute to the CMP-N-acetyl-beta-neuraminate site. Catalysis depends on His-354, which acts as the Proton donor/acceptor.

This sequence belongs to the glycosyltransferase 29 family. In terms of assembly, homodimer. Post-translationally, autopolysialylated. In terms of tissue distribution, expressed in fetal and adult brain and fetal liver.

The protein resides in the golgi apparatus membrane. It catalyses the reaction [N-acetyl-alpha-D-neuraminosyl-(2-&gt;8)](n) + CMP-N-acetyl-beta-neuraminate = [N-acetyl-alpha-D-neuraminosyl-(2-&gt;8)](n+1) + CMP + H(+). It carries out the reaction alpha-Neu5Ac-(2-&gt;3)-beta-D-Gal-(1-&gt;4)-6S-D-GlcNAc + CMP-N-acetyl-beta-neuraminate = alpha-Neu5Ac-(2-&gt;8)-alpha-Neu5Ac-(2-&gt;3)-beta-D-Gal-(1-&gt;4)-6S-D-GlcNAc + CMP + H(+). The catalysed reaction is a ganglioside GM3 (d18:1(4E)) + CMP-N-acetyl-beta-neuraminate = a ganglioside GD3 (d18:1(4E)) + CMP + H(+). The enzyme catalyses a ganglioside GM3 + CMP-N-acetyl-beta-neuraminate = a ganglioside GD3 + CMP + H(+). It catalyses the reaction an N-acetyl-alpha-neuraminyl-(2-&gt;3)-beta-D-galactosyl derivative + CMP-N-acetyl-beta-neuraminate = an N-acetyl-alpha-neuraminyl-(2-&gt;8)-N-acetyl-alpha-neuraminyl-(2-&gt;3)-beta-D-galactosyl derivative + CMP + H(+). It carries out the reaction an N-acetyl-alpha-neuraminyl-(2-&gt;3)-beta-D-galactosyl-(1-&gt;4)-N-acetyl-beta-D-glucosaminyl derivative + CMP-N-acetyl-beta-neuraminate = an alpha-Neu5Ac-(2-&gt;8)-alpha-Neu5Ac-(2-&gt;3)-beta-D-Gal-(1-&gt;4)-beta-D-GlcNAc derivative + CMP + H(+). Its pathway is protein modification; protein glycosylation. Functionally, catalyzes the transfer of sialic acid from a CMP-linked sialic acid donor onto a terminal alpha-2,3-, alpha-2,6-, or alpha-2,8-linked sialic acid of an acceptor, such as N-linked oligosaccharides of glycoproteins and glycolipids through alpha-2,8-linkages. Forms oligosialic and polysialic acid on various sialylated N-acetyllactosamine oligosaccharides of glycoproteins, including FETUB N-glycans, a2-HS-glycoprotein (AHSG) and alpha 2,3-sialylated glycosphingolipids, such as alpha 2,3-sialylparagloboside and ganglioside GM3 and to a lesser extent NCAM1 N-glycans. However, it is much more specific to N-linked oligosaccharides of glycoproteins than glycosphingolipids. 2,3-sialylparagloboside serves as the best acceptor substrate among the glycolipids. alpha-Neu5Ac-(2-&gt;8)-alpha-Neu5Ac-(2-&gt;3)-beta-D-Gal-(1-&gt;4)-6S-D-GlcNAc and monosialyl and disialyl N-acetyllactosamines are the best acceptor substrates among glycoproteins. May plays critical role in the striatum by mediating the formation of disialylated and trisialylated terminal glycotopes on N- and O-glycans of specific striatal proteins, regulating their distribution in lipid rafts, affecting their interaction with other binding partners, and subsequently modulating striatal functions. This chain is Alpha-N-acetylneuraminate alpha-2,8-sialyltransferase ST8SIA3, found in Homo sapiens (Human).